A 116-amino-acid polypeptide reads, in one-letter code: Putative RNase MJ0125 (116 aa).

Residues Arg-76 and His-81 contribute to the active site. The short motif at Arg-76–Tyr-83 is the RX(4)HXY motif element. The residue at position 83 (Tyr-83) is an O-di-AMP-tyrosine.

This sequence belongs to the HepT RNase toxin family. In terms of assembly, homodimer, probably forms a complex with cognate antitoxin MJ0126. Post-translationally, modified by cognate antitoxin MJ0126; probably at least 2 successive AMPylation events occur on Tyr-83.

Probable toxic component of a putative type VII toxin-antitoxin (TA) system, probably an RNase. Probably neutralized by cognate antitoxin MJ0126. Neutralization may be due to AMPylation by MJ0126. The sequence is that of Putative RNase MJ0125 from Methanocaldococcus jannaschii (strain ATCC 43067 / DSM 2661 / JAL-1 / JCM 10045 / NBRC 100440) (Methanococcus jannaschii).